A 102-amino-acid chain; its full sequence is Small ribosomal subunit protein uS10 (102 aa).

Belongs to the universal ribosomal protein uS10 family. As to quaternary structure, part of the 30S ribosomal subunit.

Its function is as follows. Involved in the binding of tRNA to the ribosomes. The polypeptide is Small ribosomal subunit protein uS10 (Gluconacetobacter diazotrophicus (strain ATCC 49037 / DSM 5601 / CCUG 37298 / CIP 103539 / LMG 7603 / PAl5)).